Here is a 968-residue protein sequence, read N- to C-terminus: RNA polymerase-associated protein RapA (968 aa).

In terms of domain architecture, Helicase ATP-binding spans 164-334 (DVGRRHAPRV…FARLRLLDPN (171 aa)). 177-184 (DEVGLGKT) is a binding site for ATP. Residues 280–283 (DEAH) carry the DEAH box motif. The Helicase C-terminal domain maps to 490-662 (RVEWLMGYLT…YLASPDQTEG (173 aa)).

This sequence belongs to the SNF2/RAD54 helicase family. RapA subfamily. As to quaternary structure, interacts with the RNAP. Has a higher affinity for the core RNAP than for the holoenzyme. Its ATPase activity is stimulated by binding to RNAP.

Its function is as follows. Transcription regulator that activates transcription by stimulating RNA polymerase (RNAP) recycling in case of stress conditions such as supercoiled DNA or high salt concentrations. Probably acts by releasing the RNAP, when it is trapped or immobilized on tightly supercoiled DNA. Does not activate transcription on linear DNA. Probably not involved in DNA repair. The sequence is that of RNA polymerase-associated protein RapA from Shigella boydii serotype 4 (strain Sb227).